Here is a 222-residue protein sequence, read N- to C-terminus: Transcriptional regulatory protein PmrA (222 aa).

In terms of domain architecture, Response regulatory spans 2–116 (KLLIVEDDKL…ELQARVRALI (115 aa)). D51 bears the 4-aspartylphosphate mark. The ompR/PhoB-type DNA-binding region spans 124–218 (NSKIQVDNIT…LRGFGYLLTK (95 aa)).

Post-translationally, phosphorylated by PmrB.

It is found in the cytoplasm. Functionally, member of the two-component regulatory system PmrB/PmrA involved in regulation of virulence. Unphosphorylated PmrA represses extracellular enzyme genes. Phosphorylation of PmrA by PmrB relieves such repression, which leads to activation of extracellular enzyme genes. Phosphorylated PmrA seems to repress expression of the pmrCAB operon. The polypeptide is Transcriptional regulatory protein PmrA (pmrA) (Pectobacterium parmentieri).